A 117-amino-acid chain; its full sequence is MRQRVACCWVLLLLAATFCQPAAAKGGRGGSRGAARGMARGAARSRHRGLPRYGGALRVAAAAAAAGAAAGAALHQARAETEYHEGNGTAWTSVAPGWVEWGWAMPWLCPLAAILHH.

The signal sequence occupies residues 1-24; it reads MRQRVACCWVLLLLAATFCQPAAA. The N-linked (GlcNAc...) asparagine glycan is linked to asparagine 87. Alanine 104 is lipidated: GPI-anchor amidated alanine. The propeptide at 105 to 117 is removed in mature form; that stretch reads MPWLCPLAAILHH.

The protein belongs to the SPRN family.

It localises to the cell membrane. Its function is as follows. Prion-like protein that has PrP(C)-like neuroprotective activity. The protein is Shadow of prion protein (SPRN) of Gallus gallus (Chicken).